A 252-amino-acid chain; its full sequence is 5'-nucleotidase SurE (252 aa).

Aspartate 8, aspartate 9, serine 39, and asparagine 95 together coordinate a divalent metal cation.

Belongs to the SurE nucleotidase family. It depends on a divalent metal cation as a cofactor.

Its subcellular location is the cytoplasm. It catalyses the reaction a ribonucleoside 5'-phosphate + H2O = a ribonucleoside + phosphate. Functionally, nucleotidase that shows phosphatase activity on nucleoside 5'-monophosphates. In Clostridium botulinum (strain Loch Maree / Type A3), this protein is 5'-nucleotidase SurE.